We begin with the raw amino-acid sequence, 616 residues long: TAF6-like RNA polymerase II p300/CBP-associated factor-associated factor 65 kDa subunit 6L (616 aa).

Disordered regions lie at residues 399–432 (SLLL…EDPS) and 455–539 (FGTG…GTRD). 2 positions are modified to phosphoserine: serine 494 and serine 500. An asymmetric dimethylarginine mark is found at arginine 549, arginine 555, and arginine 587.

It belongs to the TAF6 family. In terms of assembly, the PCAF complex is composed of a number of TBP-associated factors (TAFS), such as TAF5, TAF5L, TAF6, TAF6L, TAF9, TAF10 and TAF12, PCAF, and also PCAF-associated factors (PAFs), such as TADA2L/ADA2, TADA3L/ADA3 and SPT3. Component of the STAGA transcription coactivator-HAT complex, at least composed of SUPT3H, GCN5L2, TAF5L, TAF6L, SUPT7L, TADA3L, TAD1L, TAF10, TAF12, TRRAP and TAF9.

It is found in the nucleus. Its function is as follows. Functions as a component of the PCAF complex. The PCAF complex is capable of efficiently acetylating histones in a nucleosomal context. The PCAF complex could be considered as the human version of the yeast SAGA complex. With TAF5L, acts as an epigenetic regulator essential for somatic reprogramming. Regulates target genes through H3K9ac deposition and MYC recruitment which trigger MYC regulatory network to orchestrate gene expression programs to control embryonic stem cell state. Functions with MYC to activate target gene expression through RNA polymerase II pause release. The sequence is that of TAF6-like RNA polymerase II p300/CBP-associated factor-associated factor 65 kDa subunit 6L from Mus musculus (Mouse).